We begin with the raw amino-acid sequence, 515 residues long: Bifunctional purine biosynthesis protein PurH (515 aa).

In terms of domain architecture, MGS-like spans 1–145; it reads MTKRALISVS…KNHASVTVVV (145 aa).

The protein belongs to the PurH family.

It catalyses the reaction (6R)-10-formyltetrahydrofolate + 5-amino-1-(5-phospho-beta-D-ribosyl)imidazole-4-carboxamide = 5-formamido-1-(5-phospho-D-ribosyl)imidazole-4-carboxamide + (6S)-5,6,7,8-tetrahydrofolate. The catalysed reaction is IMP + H2O = 5-formamido-1-(5-phospho-D-ribosyl)imidazole-4-carboxamide. Its pathway is purine metabolism; IMP biosynthesis via de novo pathway; 5-formamido-1-(5-phospho-D-ribosyl)imidazole-4-carboxamide from 5-amino-1-(5-phospho-D-ribosyl)imidazole-4-carboxamide (10-formyl THF route): step 1/1. It functions in the pathway purine metabolism; IMP biosynthesis via de novo pathway; IMP from 5-formamido-1-(5-phospho-D-ribosyl)imidazole-4-carboxamide: step 1/1. The chain is Bifunctional purine biosynthesis protein PurH from Streptococcus equi subsp. equi (strain 4047).